The primary structure comprises 202 residues: Solute carrier family 66 member 3 (202 aa).

The first 19 residues, Met-1–Ala-19, serve as a signal peptide directing secretion. 4 helical membrane-spanning segments follow: residues Ser-33–Leu-53, Leu-64–Phe-84, Ile-97–Ala-117, and Phe-171–Val-191.

It localises to the membrane. The protein is Solute carrier family 66 member 3 of Homo sapiens (Human).